The following is a 395-amino-acid chain: DNA primase small subunit PriS (395 aa).

Active-site residues include D95, D97, and D302.

The protein belongs to the eukaryotic-type primase small subunit family. As to quaternary structure, heterodimer of a small subunit (PriS) and a large subunit (PriL). It depends on Mg(2+) as a cofactor. Requires Mn(2+) as cofactor.

Its function is as follows. Catalytic subunit of DNA primase, an RNA polymerase that catalyzes the synthesis of short RNA molecules used as primers for DNA polymerase during DNA replication. The small subunit contains the primase catalytic core and has DNA synthesis activity on its own. Binding to the large subunit stabilizes and modulates the activity, increasing the rate of DNA synthesis while decreasing the length of the DNA fragments, and conferring RNA synthesis capability. The DNA polymerase activity may enable DNA primase to also catalyze primer extension after primer synthesis. May also play a role in DNA repair. This Methanothrix thermoacetophila (strain DSM 6194 / JCM 14653 / NBRC 101360 / PT) (Methanosaeta thermophila) protein is DNA primase small subunit PriS.